Consider the following 459-residue polypeptide: Exodeoxyribonuclease 7 large subunit (459 aa).

Belongs to the XseA family. In terms of assembly, heterooligomer composed of large and small subunits.

It localises to the cytoplasm. The catalysed reaction is Exonucleolytic cleavage in either 5'- to 3'- or 3'- to 5'-direction to yield nucleoside 5'-phosphates.. In terms of biological role, bidirectionally degrades single-stranded DNA into large acid-insoluble oligonucleotides, which are then degraded further into small acid-soluble oligonucleotides. The sequence is that of Exodeoxyribonuclease 7 large subunit from Pseudomonas aeruginosa (strain ATCC 15692 / DSM 22644 / CIP 104116 / JCM 14847 / LMG 12228 / 1C / PRS 101 / PAO1).